A 205-amino-acid chain; its full sequence is UPF0316 protein Cthe_2213 (205 aa).

A run of 3 helical transmembrane segments spans residues 15–37, 44–64, and 70–90; these read LPLLIFFSRIIDVTIGTIRIIFV, LAPVLGFFEVLVWIMAISQIM, and FVCYFAYAAGFATGTFVGIII.

This sequence belongs to the UPF0316 family.

Its subcellular location is the cell membrane. The chain is UPF0316 protein Cthe_2213 from Acetivibrio thermocellus (strain ATCC 27405 / DSM 1237 / JCM 9322 / NBRC 103400 / NCIMB 10682 / NRRL B-4536 / VPI 7372) (Clostridium thermocellum).